The primary structure comprises 265 residues: Hydroxyethylthiazole kinase (265 aa).

M50 contributes to the substrate binding site. 2 residues coordinate ATP: R125 and T171. G198 provides a ligand contact to substrate.

The protein belongs to the Thz kinase family. The cofactor is Mg(2+).

The enzyme catalyses 5-(2-hydroxyethyl)-4-methylthiazole + ATP = 4-methyl-5-(2-phosphooxyethyl)-thiazole + ADP + H(+). The protein operates within cofactor biosynthesis; thiamine diphosphate biosynthesis; 4-methyl-5-(2-phosphoethyl)-thiazole from 5-(2-hydroxyethyl)-4-methylthiazole: step 1/1. Catalyzes the phosphorylation of the hydroxyl group of 4-methyl-5-beta-hydroxyethylthiazole (THZ). The protein is Hydroxyethylthiazole kinase of Salmonella paratyphi C (strain RKS4594).